The chain runs to 548 residues: MESMMAAHPMYMMQYQYDNRQHAHYAHLPSQQPMAFYPAVPMVPSTPTYSRPASACSQPAMQSMKQMPMTSYPSAMTPMASPQPMARRSNIVLETEACDWEGKRHQAHGIYYPSTPPLSSSGSAISSPESCDMLSTPMNPMFSGLDSIESIKPEVNSPESFPVLEWTSCASPPMTPVYLNNVNNNLHSKQNLRPAPTSSCSPELAPAVSACPSLSPSPVPQTRSFTSETSFCDPRNLTVGNVTLGLEPASLSTETLVAQADNSFVFVAPQAAPTWDAISELESEEDFVKGLVNLDDSKSDAQGTRTRASSDAVSLNFDEVEAFPLLPTAHTHSDDDCHKSKRQRTCGGPKMDSATNESASSAAAPSSEQQQQPKSSDVPSNEETKSNSGASTNSDGTGLPAPTSRRGRKQSLTEDPSKAFKCELCDRRFRRQEHLKRHYRSLHTQDKPFECNECGKKFSRSDNLTQHARTHGSGAIPLNIMGEEDLAAAAANGYMHPPQHMYSMVPNVPTLPDYNSYGKVLFQIAAEVPGSASDYSDDGSERKRKRTD.

2 consecutive C2H2-type zinc fingers follow at residues 420 to 448 and 449 to 471; these read FKCE…QDKP and FECN…ARTH.

As to quaternary structure, interacts with HOG1/OSM1.

Its subcellular location is the nucleus. It localises to the cytoplasm. Functionally, transcription factor that acts as a key downstream transcription factor in the HOG1-MAPK pathway. Regulates the expression of a series of downstream genes and controls vegetative growth, conidiogenesis, cell wall integrity, stress response, mitochondrial morphology, and pathogenicity. Binds to a putative promoter region 1500 bp upstream of the start codons of the target genes MGG_07019, POX1 and DCI1. Binds to the AGGGG and CCCCT motif of the COS1 promoter region. Involved in fatty acid beta-oxidation by directly regulating the expression of the dienoyl-CoA isomerase DCI1, thereby facilitating invasive hyphal growth during the early infection stage. Targets also the 3-methylglutaconyl-CoA hydratase-encoding gene (AUH1) to control mitochondrial morphology and mitophagy, which are critical for the infectious growth of the pathogen. The protein is C2H2-type transcription factor MSN2 of Pyricularia oryzae (strain 70-15 / ATCC MYA-4617 / FGSC 8958) (Rice blast fungus).